The primary structure comprises 1101 residues: Zinc finger SWIM domain-containing protein 4 (1101 aa).

The segment at 1–29 (MEPPAAKRSRGCPAGDEPGTGARRSRPEP) is disordered. The SWIM-type zinc finger occupies 134–171 (YHVSISFDRCKITSVSCGCDNRDLFYCAHVVALSLYRI).

The sequence is that of Zinc finger SWIM domain-containing protein 4 (Zswim4) from Mus musculus (Mouse).